The following is a 182-amino-acid chain: Protein Syd (182 aa).

The protein belongs to the Syd family.

It is found in the cell inner membrane. Functionally, interacts with the SecY protein in vivo. May bind preferentially to an uncomplexed state of SecY, thus functioning either as a chelating agent for excess SecY in the cell or as a regulatory factor that negatively controls the translocase function. This is Protein Syd from Aeromonas hydrophila subsp. hydrophila (strain ATCC 7966 / DSM 30187 / BCRC 13018 / CCUG 14551 / JCM 1027 / KCTC 2358 / NCIMB 9240 / NCTC 8049).